A 202-amino-acid chain; its full sequence is Ras-related protein Rab-18 (202 aa).

GTP-binding residues include S18, G21, K22, S23, S24, D35, P36, T41, G67, K124, D126, and A153. An Effector region motif is present at residues 38 to 46 (QAATIGVDF). S-geranylgeranyl cysteine attachment occurs at residues C198 and C200.

It belongs to the small GTPase superfamily. Rab family.

The protein resides in the cell membrane. The catalysed reaction is GTP + H2O = GDP + phosphate + H(+). Its function is as follows. The small GTPases Rab are key regulators of intracellular membrane trafficking, from the formation of transport vesicles to their fusion with membranes. Rabs cycle between an inactive GDP-bound form and an active GTP-bound form that is able to recruit to membranes different sets of downstream effectors directly responsible for vesicle formation, movement, tethering and fusion. The protein is Ras-related protein Rab-18 (RAB18A) of Lymnaea stagnalis (Great pond snail).